We begin with the raw amino-acid sequence, 89 residues long: MDTILLTGLFAAFFTTFAFAPQSIKTIRTRNTEGISVVMYIMFLTGVISWIAYGIMRSDFAVLIANIVTLFLAAPVLVITLINRRKKHV.

3 helical membrane-spanning segments follow: residues 4-27 (ILLT…IKTI), 35-55 (ISVV…AYGI), and 60-82 (FAVL…ITLI). The region spanning 7–59 (TGLFAAFFTTFAFAPQSIKTIRTRNTEGISVVMYIMFLTGVISWIAYGIMRSD) is the PQ-loop domain.

Homodimer.

Its subcellular location is the cell membrane. Functionally, the homodimer mediates transmembrane sugar transport down a concentration gradient. Transport is probably effected by rocking-type movements, where a cargo-binding cavity opens first on one and then on the other side of the membrane. The polypeptide is Sugar transporter SemiSWEET (Escherichia coli (strain UMEA 3162-1)).